The chain runs to 92 residues: Small ribosomal subunit protein uS19c (92 aa).

Belongs to the universal ribosomal protein uS19 family.

Its subcellular location is the plastid. The protein localises to the chloroplast. Functionally, protein S19 forms a complex with S13 that binds strongly to the 16S ribosomal RNA. The chain is Small ribosomal subunit protein uS19c from Chloranthus spicatus (Chulantree).